A 422-amino-acid chain; its full sequence is 26S proteasome non-ATPase regulatory subunit 11 (422 aa).

Residues 224–392 form the PCI domain; sequence DWKTAYSYFY…GVLIIFDEPP (169 aa).

The protein belongs to the proteasome subunit S9 family. In terms of assembly, component of the 19S proteasome regulatory particle complex. The 26S proteasome consists of a 20S core particle (CP) and two 19S regulatory subunits (RP). The regulatory particle is made of a lid composed of 9 subunits including PSMD11, a base containing 6 ATPases and few additional components.

The protein resides in the nucleus. Its subcellular location is the cytoplasm. It is found in the cytosol. Component of the 26S proteasome, a multiprotein complex involved in the ATP-dependent degradation of ubiquitinated proteins. This complex plays a key role in the maintenance of protein homeostasis by removing misfolded or damaged proteins, which could impair cellular functions, and by removing proteins whose functions are no longer required. Therefore, the proteasome participates in numerous cellular processes, including cell cycle progression, apoptosis, or DNA damage repair. In the complex, PSMD11 is required for proteasome assembly. Plays a key role in increased proteasome activity in embryonic stem cells (ESCs): its high expression in ESCs promotes enhanced assembly of the 26S proteasome, followed by higher proteasome activity. The protein is 26S proteasome non-ATPase regulatory subunit 11 (psmd11) of Xenopus tropicalis (Western clawed frog).